Consider the following 385-residue polypeptide: Homoserine O-succinyltransferase (385 aa).

Residues asparagine 51 to leucine 359 enclose the AB hydrolase-1 domain. Serine 157 (nucleophile) is an active-site residue. Arginine 227 lines the substrate pocket. Residues aspartate 322 and histidine 355 contribute to the active site. Residue aspartate 356 participates in substrate binding.

This sequence belongs to the AB hydrolase superfamily. MetX family. As to quaternary structure, homodimer.

The protein resides in the cytoplasm. It catalyses the reaction L-homoserine + succinyl-CoA = O-succinyl-L-homoserine + CoA. Its pathway is amino-acid biosynthesis; L-methionine biosynthesis via de novo pathway; O-succinyl-L-homoserine from L-homoserine: step 1/1. In terms of biological role, transfers a succinyl group from succinyl-CoA to L-homoserine, forming succinyl-L-homoserine. The sequence is that of Homoserine O-succinyltransferase from Marinomonas sp. (strain MWYL1).